The sequence spans 213 residues: Elongation factor 1-beta (213 aa).

Residues 67 to 80 (AGKAPAASGSAAAA) are compositionally biased toward low complexity. The disordered stretch occupies residues 67-88 (AGKAPAASGSAAAAAEEEDDED).

The protein belongs to the EF-1-beta/EF-1-delta family. In terms of assembly, EF-1 is composed of 4 subunits: alpha, beta, delta, and gamma.

Functionally, EF-1-beta and EF-1-delta stimulate the exchange of GDP bound to EF-1-alpha to GTP. The chain is Elongation factor 1-beta (EFB1) from Candida albicans (strain WO-1) (Yeast).